Here is a 259-residue protein sequence, read N- to C-terminus: 5'-nucleotidase SurE (259 aa).

The a divalent metal cation site is built by aspartate 11, aspartate 12, serine 42, and asparagine 99.

Belongs to the SurE nucleotidase family. It depends on a divalent metal cation as a cofactor.

The protein resides in the cytoplasm. The catalysed reaction is a ribonucleoside 5'-phosphate + H2O = a ribonucleoside + phosphate. Functionally, nucleotidase that shows phosphatase activity on nucleoside 5'-monophosphates. This is 5'-nucleotidase SurE from Cytophaga hutchinsonii (strain ATCC 33406 / DSM 1761 / CIP 103989 / NBRC 15051 / NCIMB 9469 / D465).